A 1783-amino-acid polypeptide reads, in one-letter code: Collagen alpha-1(XXVII) chain A (1783 aa).

The first 35 residues, 1-35, serve as a signal peptide directing secretion; that stretch reads MNLATRRRVRRTSRLVAKRALLLCILLYCTSFGFT. Positions 73–235 constitute a Laminin G-like domain; sequence TTRARVTTPT…NICSAIRRQC (163 aa). Disordered stretches follow at residues 288-312, 327-524, 553-744, 772-1461, and 1512-1546; these read SSSV…LALM, HKPS…PRTP, VGAP…APGP, PGNM…GDIG, and GNPG…LPGP. Low complexity predominate over residues 403 to 415; sequence KPTSVPKPNPTKN. A compositionally biased stretch (pro residues) spans 436-447; the sequence is LPAPKPTVPKRP. A compositionally biased stretch (polar residues) spans 462-494; sequence HTTPLTPKSTLAPNSTSKKPLPTLKSTSFTTAA. The triple-helical region stretch occupies residues 553–1547; that stretch reads VGAPGLKGDQ…RGPPGLPGPP (995 aa). Residues 554 to 608 form the Collagen-like 1 domain; the sequence is GAPGLKGDQGESGLPGPPGKPGQPGMRGPRGPPGPHGKPGRPGPTGLKGKKGDPG. Low complexity-rich tracts occupy residues 622–633, 651–661, 735–744, 817–829, and 861–870; these read VGLPGPVGLVGV, EPGEQGPVGEA, EPGVIGAPGP, PGPQ…IGPS, and ARGLPGPRGA. Collagen-like domains are found at residues 818–873 and 845–902; these read GPQG…AAGR and GKPG…GALG. Gly residues predominate over residues 926 to 935; that stretch reads GFIGPGGEAG. Over residues 967 to 976 the composition is skewed to pro residues; the sequence is GGPPGPPGSP. Low complexity-rich tracts occupy residues 978-988 and 1098-1129; these read SPGSRGPIGIR and SIGL…AGPD. One can recognise a Collagen-like 4 domain in the interval 986–1043; it reads GIRGPKGRRGPRGPDGVPGEIGTEGKKGPDGPPGKIGFPGHAGKIGESGEVGPKGFPG. Composition is skewed to basic and acidic residues over residues 1131 to 1158, 1170 to 1182, and 1257 to 1267; these read TKGE…KDGP, PEGK…ERGK, and AKGEQGDDGKV. A Collagen-like 5 domain is found at 1269–1326; that stretch reads GPTGAPGLRGPVGKRGDRGEPGDPGYVGQQGVDGLRGKPGAPGLPGDPGPRGTQGPKG. Low complexity-rich tracts occupy residues 1334–1349 and 1396–1409; these read KGKQ…RGSP and LPGK…VGVI. Collagen-like domains lie at 1446-1503 and 1497-1549; these read GPQG…GLAG and GRGG…PPGI. Pro residues predominate over residues 1537–1546; that stretch reads PRGPPGLPGP. Positions 1551–1783 are cleaved as a propeptide — C-terminal propeptide; that stretch reads LAMNQDFGLG…HLEVGPVCFL (233 aa). Positions 1589 to 1783 constitute a Fibrillar collagen NC1 domain; it reads PEILRTLDYL…HLEVGPVCFL (195 aa). 3 disulfides stabilise this stretch: Cys-1619–Cys-1651, Cys-1660–Cys-1781, and Cys-1696–Cys-1734. Ca(2+) is bound by residues Asp-1637, Asn-1639, Cys-1642, and Asp-1645. Asn-1698 carries N-linked (GlcNAc...) asparagine glycosylation.

It belongs to the fibrillar collagen family. As to expression, expressed dynamically in the notochord from late epiboly, spreading to the anterior notochord by 24 hpf, and then throughout the notochord by 30 hpf. Subsequently, notochordal expression becomes restricted to the distal tip of the tail by 48 hpf and is no longer detectable by 72 hpf. Also expressed throughout the floor plate and hypochord at 24 hpf, and in forming head cartilages and the first forming tooth.

It localises to the secreted. The protein localises to the extracellular space. It is found in the extracellular matrix. Its function is as follows. May play a role during the calcification of cartilage and the transition of cartilage to bone. Together with col27a1b, plays a role in development of the notochord and axial skeleton. The chain is Collagen alpha-1(XXVII) chain A from Danio rerio (Zebrafish).